The primary structure comprises 108 residues: Nucleoid-associated protein HEAR1046 (108 aa).

The disordered stretch occupies residues 86–108 (TSQEKMAGATAGMPMPPGFKMPF). Residues 99–108 (PMPPGFKMPF) are compositionally biased toward pro residues.

This sequence belongs to the YbaB/EbfC family. In terms of assembly, homodimer.

The protein resides in the cytoplasm. Its subcellular location is the nucleoid. Its function is as follows. Binds to DNA and alters its conformation. May be involved in regulation of gene expression, nucleoid organization and DNA protection. This is Nucleoid-associated protein HEAR1046 from Herminiimonas arsenicoxydans.